Reading from the N-terminus, the 227-residue chain is ATP-dependent dethiobiotin synthetase BioD (227 aa).

13–18 (DIGKTY) is a binding site for ATP. A Mg(2+)-binding site is contributed by T17. The active site involves K38. Residue S42 participates in substrate binding. ATP-binding positions include D55, 116–119 (EGSG), and 179–180 (NN). Positions 55 and 116 each coordinate Mg(2+).

This sequence belongs to the dethiobiotin synthetase family. As to quaternary structure, homodimer. Mg(2+) is required as a cofactor.

The protein resides in the cytoplasm. It catalyses the reaction (7R,8S)-7,8-diammoniononanoate + CO2 + ATP = (4R,5S)-dethiobiotin + ADP + phosphate + 3 H(+). It functions in the pathway cofactor biosynthesis; biotin biosynthesis; biotin from 7,8-diaminononanoate: step 1/2. Its function is as follows. Catalyzes a mechanistically unusual reaction, the ATP-dependent insertion of CO2 between the N7 and N8 nitrogen atoms of 7,8-diaminopelargonic acid (DAPA, also called 7,8-diammoniononanoate) to form a ureido ring. This is ATP-dependent dethiobiotin synthetase BioD from Clostridium botulinum (strain Alaska E43 / Type E3).